The primary structure comprises 149 residues: DnaJ homolog subfamily C member 24 (149 aa).

The 72-residue stretch at 11–82 (DWYSILGADP…ETKKEYDLQR (72 aa)) folds into the J domain. A DPH-type MB domain is found at 93-148 (VDARIYLEEMSWNEDDHSFSLSCRCGGKYSVSKDEAEEVTLISCDTCSLIIELLHY). Cys-115, Cys-117, Cys-136, and Cys-139 together coordinate Zn(2+).

It belongs to the DPH4 family. As to quaternary structure, monomer and homooligomer. Iron binding promotes oligomerization.

Its subcellular location is the cytoplasm. It localises to the cytoskeleton. Its pathway is protein modification; peptidyl-diphthamide biosynthesis. Stimulates the ATPase activity of several Hsp70-type chaperones. This ability is enhanced by iron-binding. The iron-bound form is redox-active and can function as electron carrier. Plays a role in the diphthamide biosynthesis, a post-translational modification of histidine which occurs in translation elongation factor 2 (EEF2). In Bos taurus (Bovine), this protein is DnaJ homolog subfamily C member 24 (DNAJC24).